The primary structure comprises 143 residues: Transcriptional regulator MraZ (143 aa).

SpoVT-AbrB domains follow at residues 5–47 (EYRH…PQVE) and 76–119 (ATEC…SKEL).

This sequence belongs to the MraZ family. In terms of assembly, forms oligomers.

The protein resides in the cytoplasm. It is found in the nucleoid. The sequence is that of Transcriptional regulator MraZ from Halalkalibacterium halodurans (strain ATCC BAA-125 / DSM 18197 / FERM 7344 / JCM 9153 / C-125) (Bacillus halodurans).